The primary structure comprises 838 residues: Leucine--tRNA ligase (838 aa).

The 'HIGH' region motif lies at 36–46; it reads PYPSGKIHMGH. The 'KMSKS' region motif lies at 611-615; sequence KMSKS. ATP is bound at residue K614.

The protein belongs to the class-I aminoacyl-tRNA synthetase family.

The protein localises to the cytoplasm. It carries out the reaction tRNA(Leu) + L-leucine + ATP = L-leucyl-tRNA(Leu) + AMP + diphosphate. The protein is Leucine--tRNA ligase of Wolbachia pipientis wMel.